The following is a 342-amino-acid chain: Succinylglutamate desuccinylase (342 aa).

3 residues coordinate Zn(2+): His62, Glu65, and His158. Glu222 is a catalytic residue.

This sequence belongs to the AspA/AstE family. Succinylglutamate desuccinylase subfamily. It depends on Zn(2+) as a cofactor.

It carries out the reaction N-succinyl-L-glutamate + H2O = L-glutamate + succinate. Its pathway is amino-acid degradation; L-arginine degradation via AST pathway; L-glutamate and succinate from L-arginine: step 5/5. Its function is as follows. Transforms N(2)-succinylglutamate into succinate and glutamate. This chain is Succinylglutamate desuccinylase, found in Shewanella frigidimarina (strain NCIMB 400).